Consider the following 280-residue polypeptide: Cycloeucalenol cycloisomerase (280 aa).

The next 6 helical transmembrane spans lie at 22–42 (LFFLFYTPFWLTLCLGIVVPY), 53–73 (YLLLALVSAVPAFVIPMLLVG), 89–109 (ANLWIIVFSYVGNYFWTHYFF), 167–187 (FEAAWILALSYFIAYLETIAI), 201–221 (MYRVGCLFYAIYFIVSFPMFF), and 244–264 (AMLVTIILDLWRLFLGPIVPL).

Its subcellular location is the membrane. It carries out the reaction cycloeucalenol = obtusifoliol. Functionally, converts pentacyclic cyclopropyl sterols to tetracyclic sterols. The sequence is that of Cycloeucalenol cycloisomerase (CPI1) from Arabidopsis thaliana (Mouse-ear cress).